The following is a 278-amino-acid chain: Small ribosomal subunit protein uS3 (278 aa).

The region spanning 39–107 (VRDFLKKRLA…PVHVNIEEVR (69 aa)) is the KH type-2 domain. A disordered region spans residues 217 to 278 (VENENEARRG…DAAAVEKEVS (62 aa)). A compositionally biased stretch (basic and acidic residues) spans 230–239 (PRNDAGDNRG).

It belongs to the universal ribosomal protein uS3 family. Part of the 30S ribosomal subunit. Forms a tight complex with proteins S10 and S14.

Its function is as follows. Binds the lower part of the 30S subunit head. Binds mRNA in the 70S ribosome, positioning it for translation. This chain is Small ribosomal subunit protein uS3, found in Aromatoleum aromaticum (strain DSM 19018 / LMG 30748 / EbN1) (Azoarcus sp. (strain EbN1)).